The following is a 464-amino-acid chain: Glucan 1,3-beta-glucosidase 3 (464 aa).

It belongs to the glycosyl hydrolase 5 (cellulase A) family.

It carries out the reaction Successive hydrolysis of beta-D-glucose units from the non-reducing ends of (1-&gt;3)-beta-D-glucans, releasing alpha-glucose.. This is Glucan 1,3-beta-glucosidase 3 (exg3) from Schizosaccharomyces pombe (strain 972 / ATCC 24843) (Fission yeast).